The primary structure comprises 547 residues: Glucose-6-phosphate isomerase (547 aa).

Catalysis depends on E351, which acts as the Proton donor. Catalysis depends on residues H382 and K509.

The protein belongs to the GPI family.

Its subcellular location is the cytoplasm. The catalysed reaction is alpha-D-glucose 6-phosphate = beta-D-fructose 6-phosphate. Its pathway is carbohydrate biosynthesis; gluconeogenesis. It participates in carbohydrate degradation; glycolysis; D-glyceraldehyde 3-phosphate and glycerone phosphate from D-glucose: step 2/4. Its function is as follows. Catalyzes the reversible isomerization of glucose-6-phosphate to fructose-6-phosphate. The sequence is that of Glucose-6-phosphate isomerase from Coxiella burnetii (strain CbuG_Q212) (Coxiella burnetii (strain Q212)).